A 5263-amino-acid chain; its full sequence is Fibroin heavy chain (5263 aa).

Positions 1–21 are cleaved as a signal peptide; it reads MRVKTFVILCCALQYVAYTNA. Residues 149–5206 are highly repetitive; the sequence is AAVGAGAGAG…GSGAGAGGSV (5058 aa). A disulfide bridge links cysteine 5260 with cysteine 5263.

As to quaternary structure, silk fibroin elementary unit consists in a disulfide-linked heavy and light chain and a p25 glycoprotein in molar ratios of 6:6:1. This results in a complex of approximately 2.3 MDa. In terms of processing, the interchain disulfide bridge is essential for the intracellular transport and secretion of fibroin. In terms of tissue distribution, produced exclusively in the posterior (PSG) section of silk glands, which are essentially modified salivary glands.

Functionally, core component of the silk filament; a strong, insoluble and chemically inert fiber. The protein is Fibroin heavy chain (FIBH) of Bombyx mori (Silk moth).